We begin with the raw amino-acid sequence, 337 residues long: RNA 3'-terminal phosphate cyclase (337 aa).

ATP is bound by residues glutamine 101 and 282-285 (HMSD). Histidine 306 functions as the Tele-AMP-histidine intermediate in the catalytic mechanism.

The protein belongs to the RNA 3'-terminal cyclase family. Type 1 subfamily.

It localises to the cytoplasm. It carries out the reaction a 3'-end 3'-phospho-ribonucleotide-RNA + ATP = a 3'-end 2',3'-cyclophospho-ribonucleotide-RNA + AMP + diphosphate. Catalyzes the conversion of 3'-phosphate to a 2',3'-cyclic phosphodiester at the end of RNA. The mechanism of action of the enzyme occurs in 3 steps: (A) adenylation of the enzyme by ATP; (B) transfer of adenylate to an RNA-N3'P to produce RNA-N3'PP5'A; (C) and attack of the adjacent 2'-hydroxyl on the 3'-phosphorus in the diester linkage to produce the cyclic end product. The biological role of this enzyme is unknown but it is likely to function in some aspects of cellular RNA processing. The sequence is that of RNA 3'-terminal phosphate cyclase (rtcA) from Saccharolobus solfataricus (strain ATCC 35092 / DSM 1617 / JCM 11322 / P2) (Sulfolobus solfataricus).